Reading from the N-terminus, the 273-residue chain is tRNA pseudouridine synthase B (273 aa).

Asp-38 (nucleophile) is an active-site residue.

Belongs to the pseudouridine synthase TruB family. Type 1 subfamily.

The catalysed reaction is uridine(55) in tRNA = pseudouridine(55) in tRNA. Its function is as follows. Responsible for synthesis of pseudouridine from uracil-55 in the psi GC loop of transfer RNAs. This is tRNA pseudouridine synthase B from Sulfurimonas denitrificans (strain ATCC 33889 / DSM 1251) (Thiomicrospira denitrificans (strain ATCC 33889 / DSM 1251)).